The chain runs to 496 residues: Flt3-interacting zinc finger protein 1 (496 aa).

Residue M1 is modified to N-acetylmethionine. 6 consecutive C2H2-type zinc fingers follow at residues 23–45 (FHCSECGKSFRYRSDLRRHFARH), 51–73 (HACPRCGKGFKHSFNLANHLRSH), 79–101 (YRCSACPKGFRDSTGLLHHQVVH), 107–130 (YCCLVCELRFSSRSSLGRHLKRQH), 200–222 (FACGACARRFDHGRELAAHWAAH), and 228–250 (FKCPRCERDFNAPALLERHKLTH). Residues 250-280 (HDLQGPGAPPAQAWAAGPGAGPETAGEGTAA) form a disordered region. The span at 259–280 (PAQAWAAGPGAGPETAGEGTAA) shows a compositional bias: low complexity. C2H2-type zinc fingers lie at residues 331 to 352 (YQCDCGTFFASAAALASHLEAH), 358 to 381 (YGCGHCGALYAALAALEEHRRVSH), 414 to 436 (FGCSECEKLFRSPRDLERHVLVH), 442 to 464 (FPCLECGKFFRHECYLKRHRLLH), and 470 to 492 (FPCHICGKGFITLSNLSRHLKLH). The disordered stretch occupies residues 378–412 (RVSHGEGGGEEAATAAREREPASGEPPSGSGRGKK).

Interacts with FLT3 cytoplasmic catalytic domain, following receptor stimulation, in a kinase-independent manner. Does not interact with other structurally related receptor tyrosine kinases, including KIT, CSF1R and PDGFR. Interacts with NRL. As to expression, widely expressed.

It localises to the cytoplasm. It is found in the nucleus. Functionally, may be a transcriptional repressor of NRL function in photoreceptors. Does not repress CRX-mediated transactivation. The sequence is that of Flt3-interacting zinc finger protein 1 (FIZ1) from Homo sapiens (Human).